The following is a 436-amino-acid chain: MRFKDQVHFIRRNMKKNRLRVFMTILATTMACAFLVVLSSVGFGIQKTITDMTMSQQIVTKVSVMGKEGDKPIKKADLEKYDHVRSVVERTQVYEPNKATLGNRTNESSNLIFTNMNDELKANMELEKGRVAKSENEIVVGYDFAKRLLTKKESEEYNKKIEEAKGNPEDIKEPKGYTKDILNKTIELSVSKTDSKTGDVTKTKTYDFKIVGITKKPSQDWMEDSNIFISDQFKKDFSEFLDFKGGNVETNIGVFADKFENVEQLTNDLTDDGYYVTSVTTELEGANTFFMVFKIGLIFVGCIAVIISAIGIFNTMTMAVTERTQEIGIMKAIGASPSIIRRMFLMESAYIGILGCVIGIIISYGVSYLVNLAVPMILAATSGGDAGDLNYTFSYIPASLVIIAVVICGGVAVISGMNPARKATKTNVLTALRREL.

The signal sequence occupies residues methionine 1–alanine 31. Cysteine 32 is lipidated: N-palmitoyl cysteine. Cysteine 32 is lipidated: S-diacylglycerol cysteine. A coiled-coil region spans residues asparagine 115–lysine 165. Helical transmembrane passes span phenylalanine 293 to phenylalanine 313, tyrosine 350 to valine 370, and isoleucine 396 to glycine 416.

Belongs to the ABC-4 integral membrane protein family. In terms of assembly, the complex is composed of 2 ATP-binding proteins (YtrB and YtrE), 2 transmembrane proteins (YtrC and YtrD) and a solute-binding protein (YtrF).

Its subcellular location is the cell membrane. In terms of biological role, part of the ABC transporter complex YtrBCDEF that plays a role in acetoin utilization during stationary phase and sporulation. This Bacillus subtilis (strain 168) protein is ABC transporter permease YtrF (ytrF).